The sequence spans 425 residues: tRNA(Ile)-lysidine synthase (425 aa).

Residue 27-32 (SGGLDS) coordinates ATP.

Belongs to the tRNA(Ile)-lysidine synthase family.

Its subcellular location is the cytoplasm. It catalyses the reaction cytidine(34) in tRNA(Ile2) + L-lysine + ATP = lysidine(34) in tRNA(Ile2) + AMP + diphosphate + H(+). Functionally, ligates lysine onto the cytidine present at position 34 of the AUA codon-specific tRNA(Ile) that contains the anticodon CAU, in an ATP-dependent manner. Cytidine is converted to lysidine, thus changing the amino acid specificity of the tRNA from methionine to isoleucine. The chain is tRNA(Ile)-lysidine synthase from Streptococcus pneumoniae (strain P1031).